A 249-amino-acid chain; its full sequence is Precorrin-4 C(11)-methyltransferase (249 aa).

Belongs to the precorrin methyltransferase family.

It carries out the reaction precorrin-4 + S-adenosyl-L-methionine = precorrin-5 + S-adenosyl-L-homocysteine. It functions in the pathway cofactor biosynthesis; adenosylcobalamin biosynthesis; cob(II)yrinate a,c-diamide from precorrin-2 (aerobic route): step 4/10. In terms of biological role, catalyzes the methylation of C-11 in precorrin-4 to form precorrin-5. The protein is Precorrin-4 C(11)-methyltransferase (cobM) of Rhodococcus erythropolis (Arthrobacter picolinophilus).